A 244-amino-acid chain; its full sequence is Nonsense-mediated decay protein 4 (244 aa).

The protein resides in the cytoplasm. Functionally, involved in nonsense-mediated decay of mRNAs containing premature stop codons. This Candida glabrata (strain ATCC 2001 / BCRC 20586 / JCM 3761 / NBRC 0622 / NRRL Y-65 / CBS 138) (Yeast) protein is Nonsense-mediated decay protein 4 (NMD4).